Here is a 322-residue protein sequence, read N- to C-terminus: UDP-N-acetylenolpyruvoylglucosamine reductase (322 aa).

The FAD-binding PCMH-type domain maps to 36 to 202 (RAGGPAQVLF…TSVLFEGVPG (167 aa)). Arg-182 is an active-site residue. The Proton donor role is filled by Ser-231. Residue Glu-301 is part of the active site.

Belongs to the MurB family. The cofactor is FAD.

It localises to the cytoplasm. The enzyme catalyses UDP-N-acetyl-alpha-D-muramate + NADP(+) = UDP-N-acetyl-3-O-(1-carboxyvinyl)-alpha-D-glucosamine + NADPH + H(+). The protein operates within cell wall biogenesis; peptidoglycan biosynthesis. Cell wall formation. The protein is UDP-N-acetylenolpyruvoylglucosamine reductase of Brucella suis (strain ATCC 23445 / NCTC 10510).